We begin with the raw amino-acid sequence, 524 residues long: Maturase K (524 aa).

This sequence belongs to the intron maturase 2 family. MatK subfamily.

It localises to the plastid. The protein localises to the chloroplast. Functionally, usually encoded in the trnK tRNA gene intron. Probably assists in splicing its own and other chloroplast group II introns. This chain is Maturase K, found in Welwitschia mirabilis (Tree tumbo).